Here is a 600-residue protein sequence, read N- to C-terminus: CDK5RAP1-like protein (600 aa).

The disordered stretch occupies residues 45–66; sequence LSSAAHPPPPPPRRLARSGPSR. One can recognise an MTTase N-terminal domain in the interval 93 to 222; it reads GRIYHETYGC…LPRLLQEVDY (130 aa). Residues Cys-102, Cys-139, Cys-185, Cys-260, Cys-264, and Cys-267 each coordinate [4Fe-4S] cluster. A Radical SAM core domain is found at 246 to 501; sequence SDNSVTAFVS…ISTFRETTAK (256 aa). The TRAM domain maps to 504–580; that stretch reads DSQVGTVQLV…TASLSGDVIA (77 aa).

It belongs to the methylthiotransferase family. MiaB subfamily. [4Fe-4S] cluster serves as cofactor.

Functionally, potential regulator of CDK5 activity. In Oryza sativa subsp. japonica (Rice), this protein is CDK5RAP1-like protein.